The chain runs to 210 residues: Probable nicotinate-nucleotide adenylyltransferase (210 aa).

This sequence belongs to the NadD family.

It catalyses the reaction nicotinate beta-D-ribonucleotide + ATP + H(+) = deamido-NAD(+) + diphosphate. It functions in the pathway cofactor biosynthesis; NAD(+) biosynthesis; deamido-NAD(+) from nicotinate D-ribonucleotide: step 1/1. Functionally, catalyzes the reversible adenylation of nicotinate mononucleotide (NaMN) to nicotinic acid adenine dinucleotide (NaAD). This Streptococcus pyogenes serotype M6 (strain ATCC BAA-946 / MGAS10394) protein is Probable nicotinate-nucleotide adenylyltransferase.